The primary structure comprises 502 residues: Arabinose import ATP-binding protein AraG (502 aa).

2 ABC transporter domains span residues 6 to 241 and 252 to 497; these read LEFD…MVGR and REVG…MVES. 38 to 45 serves as a coordination point for ATP; the sequence is GENGAGKS.

This sequence belongs to the ABC transporter superfamily. Arabinose importer (TC 3.A.1.2.2) family. In terms of assembly, the complex is composed of two ATP-binding proteins (AraG), two transmembrane proteins (AraH) and a solute-binding protein (AraF).

Its subcellular location is the cell inner membrane. The catalysed reaction is L-arabinose(out) + ATP + H2O = L-arabinose(in) + ADP + phosphate + H(+). Part of the ABC transporter complex AraFGH involved in arabinose import. Responsible for energy coupling to the transport system. The protein is Arabinose import ATP-binding protein AraG of Mannheimia succiniciproducens (strain KCTC 0769BP / MBEL55E).